We begin with the raw amino-acid sequence, 254 residues long: 4-hydroxy-tetrahydrodipicolinate reductase (254 aa).

8 to 13 (GAFGRM) contributes to the NAD(+) binding site. Lys36 serves as a coordination point for NADP(+). Residues 89 to 91 (GTT) and 115 to 118 (STNY) contribute to the NAD(+) site. The active-site Proton donor/acceptor is His147. Position 148 (His148) interacts with (S)-2,3,4,5-tetrahydrodipicolinate. Lys151 serves as the catalytic Proton donor. A (S)-2,3,4,5-tetrahydrodipicolinate-binding site is contributed by 157-158 (GT).

Belongs to the DapB family.

The protein resides in the cytoplasm. It carries out the reaction (S)-2,3,4,5-tetrahydrodipicolinate + NAD(+) + H2O = (2S,4S)-4-hydroxy-2,3,4,5-tetrahydrodipicolinate + NADH + H(+). The catalysed reaction is (S)-2,3,4,5-tetrahydrodipicolinate + NADP(+) + H2O = (2S,4S)-4-hydroxy-2,3,4,5-tetrahydrodipicolinate + NADPH + H(+). Its pathway is amino-acid biosynthesis; L-lysine biosynthesis via DAP pathway; (S)-tetrahydrodipicolinate from L-aspartate: step 4/4. Functionally, catalyzes the conversion of 4-hydroxy-tetrahydrodipicolinate (HTPA) to tetrahydrodipicolinate. The polypeptide is 4-hydroxy-tetrahydrodipicolinate reductase (Methanospirillum hungatei JF-1 (strain ATCC 27890 / DSM 864 / NBRC 100397 / JF-1)).